A 131-amino-acid chain; its full sequence is UPF0102 protein YraN (131 aa).

Belongs to the UPF0102 family.

This is UPF0102 protein YraN from Salmonella agona (strain SL483).